Here is a 148-residue protein sequence, read N- to C-terminus: Ribonuclease H (148 aa).

In terms of domain architecture, RNase H type-1 spans 2–143 (TADIIYIYSD…ADVLANQGVL (142 aa)). Residues Asp11, Glu49, Asp71, and Asp135 each contribute to the Mg(2+) site.

Belongs to the RNase H family. Monomer. Mg(2+) is required as a cofactor.

It is found in the cytoplasm. The enzyme catalyses Endonucleolytic cleavage to 5'-phosphomonoester.. In terms of biological role, endonuclease that specifically degrades the RNA of RNA-DNA hybrids. This chain is Ribonuclease H, found in Thiobacillus denitrificans (strain ATCC 25259 / T1).